A 135-amino-acid polypeptide reads, in one-letter code: MSEFKRLMRLKLKMKQKRPEFKRQDWFKCSRIGTSWRRPFGKHSGMRIGLTHRAAVATVGYRGPALVRGLHPSGLQDILVNNVKELVAINPEIQGARIAATVGKRKRIEIVKKANELGIRVFNVSKQKQEEFLSL.

The protein belongs to the eukaryotic ribosomal protein eL32 family.

The chain is Large ribosomal subunit protein eL32 from Methanococcus maripaludis (strain C7 / ATCC BAA-1331).